Here is a 684-residue protein sequence, read N- to C-terminus: Fermitin family homolog 2 (684 aa).

Residues 40–81 (HIGGVMLKLVEKLDVKKDWSDHALWWEKKKTWLLKTHWTLDK) form an interaction with membranes containing phosphatidylinositol phosphate region. The disordered stretch occupies residues 141-163 (LRKPRDPKKKKKKLEDAEEETLE). In terms of domain architecture, FERM spans 279-577 (DLNPKYDAIR…SLPEFGITHF (299 aa)). The 97-residue stretch at 378-474 (KVFKPKKLTL…WMAACRLASK (97 aa)) folds into the PH domain. Position 381 (lysine 381) interacts with a 1,2-diacyl-sn-glycero-3-phospho-(1D-myo-inositol-3,4,5-trisphosphate).

It belongs to the kindlin family.

It is found in the cytoplasm. Its subcellular location is the cell cortex. The protein resides in the cytoskeleton. It localises to the stress fiber. The protein localises to the cell junction. It is found in the focal adhesion. Its subcellular location is the membrane. The protein resides in the cell projection. It localises to the lamellipodium membrane. The protein localises to the nucleus. It is found in the myofibril. Its subcellular location is the sarcomere. The protein resides in the i band. It localises to the cell surface. Scaffolding protein that enhances integrin activation mediated by TLN1 and/or TLN2, but activates integrins only weakly by itself. Binds to membranes enriched in phosphoinositides. Enhances integrin-mediated cell adhesion onto the extracellular matrix and cell spreading; this requires both its ability to interact with integrins and with phospholipid membranes. Required for the assembly of focal adhesions. Participates in the connection between extracellular matrix adhesion sites and the actin cytoskeleton and also in the orchestration of actin assembly and cell shape modulation. Plays a role in the TGFB1 and integrin signaling pathways. Stabilizes active CTNNB1 and plays a role in the regulation of transcription mediated by CTNNB1 and TCF7L2/TCF4 and in Wnt signaling. Required for normal embryonic development, including normal heart morphogenesis and normal angiogenesis. In Danio rerio (Zebrafish), this protein is Fermitin family homolog 2 (fermt2).